The primary structure comprises 207 residues: Thymidylate kinase (207 aa).

7–14 provides a ligand contact to ATP; that stretch reads GCEGSGKS.

Belongs to the thymidylate kinase family.

The enzyme catalyses dTMP + ATP = dTDP + ADP. Functionally, phosphorylation of dTMP to form dTDP in both de novo and salvage pathways of dTTP synthesis. This is Thymidylate kinase from Chlamydia felis (strain Fe/C-56) (Chlamydophila felis).